Reading from the N-terminus, the 462-residue chain is Glycine--tRNA ligase (462 aa).

Substrate contacts are provided by Arg100 and Glu175. ATP is bound by residues 207-209 (RNE), 217-222 (FRTREF), 291-292 (EL), and 335-338 (GADR). Substrate is bound at residue 222 to 226 (FEQME). 331–335 (EPSLG) contributes to the substrate binding site.

It belongs to the class-II aminoacyl-tRNA synthetase family. In terms of assembly, homodimer.

Its subcellular location is the cytoplasm. The catalysed reaction is tRNA(Gly) + glycine + ATP = glycyl-tRNA(Gly) + AMP + diphosphate. Functionally, catalyzes the attachment of glycine to tRNA(Gly). In Clostridium acetobutylicum (strain ATCC 824 / DSM 792 / JCM 1419 / IAM 19013 / LMG 5710 / NBRC 13948 / NRRL B-527 / VKM B-1787 / 2291 / W), this protein is Glycine--tRNA ligase.